A 145-amino-acid chain; its full sequence is Arginine repressor (145 aa).

It belongs to the ArgR family.

It localises to the cytoplasm. It participates in amino-acid biosynthesis; L-arginine biosynthesis [regulation]. Its function is as follows. Regulates arginine biosynthesis genes. The protein is Arginine repressor of Streptococcus equi subsp. zooepidemicus (strain H70).